We begin with the raw amino-acid sequence, 344 residues long: Methionine import ATP-binding protein MetN 1 (344 aa).

Positions 2-241 constitute an ABC transporter domain; sequence IEIRNISQRF…PHHEVTRALI (240 aa). 38–45 is an ATP binding site; sequence GRSGAGKS.

It belongs to the ABC transporter superfamily. Methionine importer (TC 3.A.1.24) family. In terms of assembly, the complex is composed of two ATP-binding proteins (MetN), two transmembrane proteins (MetI) and a solute-binding protein (MetQ).

It is found in the cell inner membrane. The enzyme catalyses L-methionine(out) + ATP + H2O = L-methionine(in) + ADP + phosphate + H(+). It catalyses the reaction D-methionine(out) + ATP + H2O = D-methionine(in) + ADP + phosphate + H(+). Functionally, part of the ABC transporter complex MetNIQ involved in methionine import. Responsible for energy coupling to the transport system. The sequence is that of Methionine import ATP-binding protein MetN 1 from Paraburkholderia xenovorans (strain LB400).